A 60-amino-acid polypeptide reads, in one-letter code: Large ribosomal subunit protein bL32 (60 aa).

The protein belongs to the bacterial ribosomal protein bL32 family.

This chain is Large ribosomal subunit protein bL32, found in Oenococcus oeni (strain ATCC BAA-331 / PSU-1).